Here is a 199-residue protein sequence, read N- to C-terminus: Securin (199 aa).

Disordered regions lie at residues 1–23 and 58–108; these read MATLIFVDKDNEEPGSRLASKDG and RKAL…DDAY. A2 bears the N-acetylalanine mark. A compositionally biased stretch (basic and acidic residues) spans 7-23; sequence VDKDNEEPGSRLASKDG. The D-box motif lies at 58–61; sequence RKAL. The TEK-box 1 signature appears at 68 to 70; it reads TEK. Polar residues predominate over residues 76-85; it reads KPLQSKQPTL. The TEK-box 2 motif lies at 91 to 93; sequence TEK. The residue at position 162 (S162) is a Phosphoserine. An SH3-binding motif is present at residues 179–192; it reads PPSALSALDVELPP.

It belongs to the securin family. Interacts with the caspase-like ESPL1, and prevents its protease activity by covering its active site. Interacts with p53/TP53 and blocks its activity probably by blocking its binding to DNA. Interacts with the Ku 70 kDa subunit of ds-DNA kinase. Interacts with PTTG1IP. Interacts with RPS10 and DNAJA1. Post-translationally, phosphorylated at Ser-162 by CDK1 during mitosis. Phosphorylated in vitro by ds-DNA kinase. In terms of processing, ubiquitinated through 'Lys-11' linkage of ubiquitin moieties by the anaphase promoting complex (APC) at the onset of anaphase, conducting to its degradation. 'Lys-11'-linked ubiquitination is mediated by the E2 ligase UBE2C/UBCH10. Expressed at low level in most tissues, except in adult testis, where it is highly expressed. Expressed in both spermatocytes and spermatids.

It localises to the cytoplasm. The protein localises to the nucleus. Its function is as follows. Regulatory protein, which plays a central role in chromosome stability, in the p53/TP53 pathway, and DNA repair. Probably acts by blocking the action of key proteins. During the mitosis, it blocks Separase/ESPL1 function, preventing the proteolysis of the cohesin complex and the subsequent segregation of the chromosomes. At the onset of anaphase, it is ubiquitinated, conducting to its destruction and to the liberation of ESPL1. Its function is however not limited to a blocking activity, since it is required to activate ESPL1. Negatively regulates the transcriptional activity and related apoptosis activity of p53/TP53. The negative regulation of p53/TP53 may explain the strong transforming capability of the protein when it is overexpressed. May also play a role in DNA repair via its interaction with Ku, possibly by connecting DNA damage-response pathways with sister chromatid separation. The sequence is that of Securin (Pttg1) from Rattus norvegicus (Rat).